The chain runs to 267 residues: Undecaprenyl-diphosphatase (267 aa).

Transmembrane regions (helical) follow at residues 1-21 (MTYF…FLPI), 39-59 (QGLA…VMYF), 87-107 (WLII…KDFI), 111-131 (LRSA…LWWV), 149-169 (ALFL…RSGI), 189-209 (FLMS…KLAL), 218-238 (FLGT…HFFL), and 246-266 (MTPF…WLAL).

Belongs to the UppP family.

Its subcellular location is the cell inner membrane. It carries out the reaction di-trans,octa-cis-undecaprenyl diphosphate + H2O = di-trans,octa-cis-undecaprenyl phosphate + phosphate + H(+). In terms of biological role, catalyzes the dephosphorylation of undecaprenyl diphosphate (UPP). Confers resistance to bacitracin. The chain is Undecaprenyl-diphosphatase from Aliivibrio salmonicida (strain LFI1238) (Vibrio salmonicida (strain LFI1238)).